Consider the following 449-residue polypeptide: Argininosuccinate synthase (449 aa).

Residues 17-25 and A43 each bind ATP; that span reads AFSGGLDTS. Y99 contributes to the L-citrulline binding site. 2 residues coordinate ATP: G129 and T131. L-aspartate contacts are provided by T131, N135, and D136. L-citrulline is bound at residue N135. D136 lines the ATP pocket. Positions 139 and 192 each coordinate L-citrulline. ATP is bound at residue D194. L-citrulline-binding residues include T201, E203, and E280.

This sequence belongs to the argininosuccinate synthase family. Type 2 subfamily. In terms of assembly, homotetramer.

The protein localises to the cytoplasm. It catalyses the reaction L-citrulline + L-aspartate + ATP = 2-(N(omega)-L-arginino)succinate + AMP + diphosphate + H(+). The protein operates within amino-acid biosynthesis; L-arginine biosynthesis; L-arginine from L-ornithine and carbamoyl phosphate: step 2/3. The protein is Argininosuccinate synthase of Dickeya dadantii (strain 3937) (Erwinia chrysanthemi (strain 3937)).